Reading from the N-terminus, the 206-residue chain is FMN-dependent NADH:quinone oxidoreductase (206 aa).

Residues 15–17 (SVS), 94–97 (MYNF), and 138–141 (TRGG) each bind FMN.

Belongs to the azoreductase type 1 family. As to quaternary structure, homodimer. It depends on FMN as a cofactor.

The enzyme catalyses 2 a quinone + NADH + H(+) = 2 a 1,4-benzosemiquinone + NAD(+). It carries out the reaction N,N-dimethyl-1,4-phenylenediamine + anthranilate + 2 NAD(+) = 2-(4-dimethylaminophenyl)diazenylbenzoate + 2 NADH + 2 H(+). Quinone reductase that provides resistance to thiol-specific stress caused by electrophilic quinones. Its function is as follows. Also exhibits azoreductase activity. Catalyzes the reductive cleavage of the azo bond in aromatic azo compounds to the corresponding amines. In Sinorhizobium medicae (strain WSM419) (Ensifer medicae), this protein is FMN-dependent NADH:quinone oxidoreductase.